A 279-amino-acid polypeptide reads, in one-letter code: Proteasome subunit alpha type-1 (279 aa).

Y103 is subject to Phosphotyrosine. Residues 235–249 (HVAIAKENDNDTPRN) show a composition bias toward basic and acidic residues. The tract at residues 235–279 (HVAIAKENDNDTPRNDDDDDRPSPPEEPAAGPRDPEVLVATEQRP) is disordered.

This sequence belongs to the peptidase T1A family. The 26S proteasome consists of a 20S proteasome core and two 19S regulatory subunits. The 20S proteasome core is composed of 28 subunits that are arranged in four stacked rings, resulting in a barrel-shaped structure. The two end rings are each formed by seven alpha subunits, and the two central rings are each formed by seven beta subunits. The catalytic chamber with the active sites is on the inside of the barrel. Interacts with PI31.

The protein resides in the cytoplasm. It localises to the nucleus. Functionally, the proteasome is a multicatalytic proteinase complex which is characterized by its ability to cleave peptides with Arg, Phe, Tyr, Leu, and Glu adjacent to the leaving group at neutral or slightly basic pH. The proteasome has an ATP-dependent proteolytic activity. This is Proteasome subunit alpha type-1 (Prosalpha6) from Drosophila melanogaster (Fruit fly).